The chain runs to 194 residues: A-type ATP synthase subunit E (194 aa).

It belongs to the V-ATPase E subunit family. In terms of assembly, has multiple subunits with at least A(3), B(3), C, D, E, F, H, I and proteolipid K(x).

The protein localises to the cell membrane. Its function is as follows. Component of the A-type ATP synthase that produces ATP from ADP in the presence of a proton gradient across the membrane. This Saccharolobus solfataricus (strain ATCC 35092 / DSM 1617 / JCM 11322 / P2) (Sulfolobus solfataricus) protein is A-type ATP synthase subunit E.